A 250-amino-acid chain; its full sequence is Probable transcriptional regulatory protein Rxyl_1318 (250 aa).

The protein belongs to the TACO1 family.

The protein localises to the cytoplasm. This is Probable transcriptional regulatory protein Rxyl_1318 from Rubrobacter xylanophilus (strain DSM 9941 / JCM 11954 / NBRC 16129 / PRD-1).